The primary structure comprises 257 residues: Uracil phosphoribosyltransferase homolog (257 aa).

Residues Arg-81, Arg-90, and 124-127 (EKGN) contribute to the GTP site. Arg-134 contributes to the 5-phospho-alpha-D-ribose 1-diphosphate binding site. The GTP site is built by Arg-151 and Arg-180. Position 186-194 (186-194 (YPILSTGNT)) interacts with 5-phospho-alpha-D-ribose 1-diphosphate. Uracil is bound at residue 247–249 (THF).

Belongs to the UPRTase family.

The protein resides in the cytoplasm. Its subcellular location is the nucleus. The chain is Uracil phosphoribosyltransferase homolog (uprt) from Danio rerio (Zebrafish).